A 141-amino-acid polypeptide reads, in one-letter code: ATP synthase epsilon chain (141 aa).

It belongs to the ATPase epsilon chain family. F-type ATPases have 2 components, CF(1) - the catalytic core - and CF(0) - the membrane proton channel. CF(1) has five subunits: alpha(3), beta(3), gamma(1), delta(1), epsilon(1). CF(0) has three main subunits: a, b and c.

It is found in the cell inner membrane. Produces ATP from ADP in the presence of a proton gradient across the membrane. In Pseudomonas savastanoi pv. phaseolicola (strain 1448A / Race 6) (Pseudomonas syringae pv. phaseolicola (strain 1448A / Race 6)), this protein is ATP synthase epsilon chain.